The chain runs to 102 residues: NADH-quinone oxidoreductase subunit K (102 aa).

Transmembrane regions (helical) follow at residues 5 to 25, 30 to 50, and 63 to 83; these read ALTGMMIVAAGLFAAGVFGVL, ILFQLISLEVALSGPALAFIA, and MFVLVLTLAAAEVAVGLALFL.

This sequence belongs to the complex I subunit 4L family. As to quaternary structure, NDH-1 is composed of 14 different subunits. Subunits NuoA, H, J, K, L, M, N constitute the membrane sector of the complex.

The protein localises to the cell inner membrane. It catalyses the reaction a quinone + NADH + 5 H(+)(in) = a quinol + NAD(+) + 4 H(+)(out). In terms of biological role, NDH-1 shuttles electrons from NADH, via FMN and iron-sulfur (Fe-S) centers, to quinones in the respiratory chain. The immediate electron acceptor for the enzyme in this species is believed to be ubiquinone. Couples the redox reaction to proton translocation (for every two electrons transferred, four hydrogen ions are translocated across the cytoplasmic membrane), and thus conserves the redox energy in a proton gradient. The sequence is that of NADH-quinone oxidoreductase subunit K from Rhodopseudomonas palustris (strain BisB18).